The sequence spans 124 residues: MATVNQLVRKPRAPKVDKTNVPALNACPQKRGVCTRVYTTTPKKPNSALRKVARVRLTNGFEVTSYIGGEGHNLQEHSVILIRGGRVKDLPGVRYHTVRGALDCAGVSSRRQGRSKYGAKRPKS.

Asp-89 carries the post-translational modification 3-methylthioaspartic acid.

Belongs to the universal ribosomal protein uS12 family. In terms of assembly, part of the 30S ribosomal subunit. Contacts proteins S8 and S17. May interact with IF1 in the 30S initiation complex.

Its function is as follows. With S4 and S5 plays an important role in translational accuracy. Functionally, interacts with and stabilizes bases of the 16S rRNA that are involved in tRNA selection in the A site and with the mRNA backbone. Located at the interface of the 30S and 50S subunits, it traverses the body of the 30S subunit contacting proteins on the other side and probably holding the rRNA structure together. The combined cluster of proteins S8, S12 and S17 appears to hold together the shoulder and platform of the 30S subunit. The sequence is that of Small ribosomal subunit protein uS12 from Shewanella putrefaciens (strain CN-32 / ATCC BAA-453).